A 408-amino-acid polypeptide reads, in one-letter code: Argininosuccinate synthase (408 aa).

ATP is bound by residues 11–19 and Ala-38; that span reads AYSGGLDTS. L-citrulline is bound by residues Tyr-91 and Ser-96. Gly-121 lines the ATP pocket. L-aspartate is bound by residues Thr-123, Asn-127, and Asp-128. Asn-127 is a binding site for L-citrulline. The L-citrulline site is built by Arg-131, Ser-182, Ser-191, Glu-267, and Tyr-279.

Belongs to the argininosuccinate synthase family. Type 1 subfamily. As to quaternary structure, homotetramer.

It is found in the cytoplasm. The enzyme catalyses L-citrulline + L-aspartate + ATP = 2-(N(omega)-L-arginino)succinate + AMP + diphosphate + H(+). It functions in the pathway amino-acid biosynthesis; L-arginine biosynthesis; L-arginine from L-ornithine and carbamoyl phosphate: step 2/3. This Paracoccus denitrificans (strain Pd 1222) protein is Argininosuccinate synthase.